The following is a 187-amino-acid chain: Preprocaerulein clone PXC202 (187 aa).

Positions 1 to 9 (NDERRFADG) are excised as a propeptide. The disordered stretch occupies residues 1–21 (NDERRFADGQQDYTGWMDFGR). Tyr-13 carries the post-translational modification Sulfotyrosine. Phe-19 bears the Phenylalanine amide mark. A propeptide spanning residues 23 to 73 (DDEDDVNERDVRGFGSFLGKALKAALKIGANALGGSPQQREANDERRFADG) is cleaved from the precursor. Tyr-77 is modified (sulfotyrosine). Phe-83 is subject to Phenylalanine amide. The propeptide occupies 87-137 (DDEDDVNERDVRGFGSFLGKALKAALKIGANALGGSLQQREVNDERRFADG). At Tyr-141 the chain carries Sulfotyrosine. Phenylalanine amide is present on Phe-147. The propeptide occupies 151–152 (DG). Tyr-156 bears the Sulfotyrosine mark. Phe-162 is modified (phenylalanine amide). Residues 166 to 187 (DDEDDVHERDVRGFGSFLGKAL) constitute a propeptide that is removed on maturation.

This sequence belongs to the gastrin/cholecystokinin family. In terms of tissue distribution, expressed by the skin glands.

The protein localises to the secreted. Its function is as follows. The pharmacological activities of caerulein are quite similar to the physiological activities of gastrin and related peptides. The chain is Preprocaerulein clone PXC202 from Xenopus laevis (African clawed frog).